The following is a 456-amino-acid chain: Cytochrome P450 monooxygenase avaH (456 aa).

Residues 243 to 263 (LMSYFVSVFLVNVALFNAVSI) form a helical membrane-spanning segment. C403 serves as a coordination point for heme.

This sequence belongs to the cytochrome P450 family. It depends on heme as a cofactor.

The protein localises to the membrane. Its pathway is secondary metabolite biosynthesis. In terms of biological role, cytochrome P450 monooxygenase; part of the cluster that mediates the biosynthesis of a highly modified cyclo-arginine-tryptophan dipeptide (cRW). The first step of the pathway is perfornmed by the arginine-containing cyclodipeptide synthase (RCPDS) avaA that acts as the scaffold-generating enzyme and is responsible for formation of the cyclo-Arg-Trp (cRW) diketopiperazine. AvaB then acts as a multifunctional flavoenzyme that is responsible for generating the cyclo-Arg-formylkynurenine DKP, which can be deformylated by avaC. AvaB then further catalyzes an additional N-oxidation followed by cyclization and dehydration. The next step is an N-acetylation of the guanidine group catalyzed by the arginine N-acetyltransferase avaD. The roles of the additional enzymes identified within the ava cluster still have to be determined. This chain is Cytochrome P450 monooxygenase avaH, found in Aspergillus versicolor.